A 177-amino-acid chain; its full sequence is Probable chemoreceptor glutamine deamidase CheD (177 aa).

This sequence belongs to the CheD family.

The enzyme catalyses L-glutaminyl-[protein] + H2O = L-glutamyl-[protein] + NH4(+). Its function is as follows. Probably deamidates glutamine residues to glutamate on methyl-accepting chemotaxis receptors (MCPs), playing an important role in chemotaxis. In Pseudomonas fluorescens (strain SBW25), this protein is Probable chemoreceptor glutamine deamidase CheD.